The chain runs to 1396 residues: DNA-directed RNA polymerase subunit beta' (1396 aa).

Positions 70, 72, 85, and 88 each coordinate Zn(2+). Mg(2+) contacts are provided by Asp460, Asp462, and Asp464. Cys807, Cys881, Cys888, and Cys891 together coordinate Zn(2+). Acidic residues predominate over residues Glu1361–Ala1378. A disordered region spans residues Glu1361 to Asp1396. Over residues Gly1379 to Glu1389 the composition is skewed to low complexity.

It belongs to the RNA polymerase beta' chain family. The RNAP catalytic core consists of 2 alpha, 1 beta, 1 beta' and 1 omega subunit. When a sigma factor is associated with the core the holoenzyme is formed, which can initiate transcription. Mg(2+) serves as cofactor. The cofactor is Zn(2+).

The catalysed reaction is RNA(n) + a ribonucleoside 5'-triphosphate = RNA(n+1) + diphosphate. Its function is as follows. DNA-dependent RNA polymerase catalyzes the transcription of DNA into RNA using the four ribonucleoside triphosphates as substrates. This chain is DNA-directed RNA polymerase subunit beta', found in Syntrophotalea carbinolica (strain DSM 2380 / NBRC 103641 / GraBd1) (Pelobacter carbinolicus).